Here is a 173-residue protein sequence, read N- to C-terminus: Protein FAM180A (173 aa).

Positions 1 to 17 (MHWKMLLLLLLYYNAEA) are cleaved as a signal peptide.

Belongs to the FAM180 family.

The protein resides in the secreted. The protein is Protein FAM180A (FAM180A) of Homo sapiens (Human).